A 181-amino-acid chain; its full sequence is UPF0398 protein LMHCC_0668 (181 aa).

Belongs to the UPF0398 family.

This Listeria monocytogenes serotype 4a (strain HCC23) protein is UPF0398 protein LMHCC_0668.